The chain runs to 123 residues: Small ribosomal subunit protein uS13 (123 aa).

Residues 94–123 (AGLPVRGQRTKTNARTRKGPKKTVGVQRKK) form a disordered region. Basic residues predominate over residues 101 to 123 (QRTKTNARTRKGPKKTVGVQRKK).

This sequence belongs to the universal ribosomal protein uS13 family. In terms of assembly, part of the 30S ribosomal subunit. Forms a loose heterodimer with protein S19. Forms two bridges to the 50S subunit in the 70S ribosome.

Located at the top of the head of the 30S subunit, it contacts several helices of the 16S rRNA. In the 70S ribosome it contacts the 23S rRNA (bridge B1a) and protein L5 of the 50S subunit (bridge B1b), connecting the 2 subunits; these bridges are implicated in subunit movement. Contacts the tRNAs in the A and P-sites. The polypeptide is Small ribosomal subunit protein uS13 (Acetivibrio thermocellus (strain ATCC 27405 / DSM 1237 / JCM 9322 / NBRC 103400 / NCIMB 10682 / NRRL B-4536 / VPI 7372) (Clostridium thermocellum)).